Here is a 293-residue protein sequence, read N- to C-terminus: Ribosomal protein L11 methyltransferase (293 aa).

4 residues coordinate S-adenosyl-L-methionine: Thr-145, Gly-166, Asp-188, and Asn-230.

It belongs to the methyltransferase superfamily. PrmA family.

The protein localises to the cytoplasm. The enzyme catalyses L-lysyl-[protein] + 3 S-adenosyl-L-methionine = N(6),N(6),N(6)-trimethyl-L-lysyl-[protein] + 3 S-adenosyl-L-homocysteine + 3 H(+). In terms of biological role, methylates ribosomal protein L11. In Salmonella agona (strain SL483), this protein is Ribosomal protein L11 methyltransferase.